The following is a 61-amino-acid chain: Large ribosomal subunit protein uL30 (61 aa).

The protein belongs to the universal ribosomal protein uL30 family. Part of the 50S ribosomal subunit.

The polypeptide is Large ribosomal subunit protein uL30 (Clostridioides difficile (strain 630) (Peptoclostridium difficile)).